The chain runs to 331 residues: Lipoyl synthase (331 aa).

C57, C62, C68, C83, C87, C90, and S294 together coordinate [4Fe-4S] cluster. Residues 69-283 (WEDREATFLI…KAEAEAIGFL (215 aa)) enclose the Radical SAM core domain.

This sequence belongs to the radical SAM superfamily. Lipoyl synthase family. [4Fe-4S] cluster is required as a cofactor.

Its subcellular location is the cytoplasm. It catalyses the reaction [[Fe-S] cluster scaffold protein carrying a second [4Fe-4S](2+) cluster] + N(6)-octanoyl-L-lysyl-[protein] + 2 oxidized [2Fe-2S]-[ferredoxin] + 2 S-adenosyl-L-methionine + 4 H(+) = [[Fe-S] cluster scaffold protein] + N(6)-[(R)-dihydrolipoyl]-L-lysyl-[protein] + 4 Fe(3+) + 2 hydrogen sulfide + 2 5'-deoxyadenosine + 2 L-methionine + 2 reduced [2Fe-2S]-[ferredoxin]. The protein operates within protein modification; protein lipoylation via endogenous pathway; protein N(6)-(lipoyl)lysine from octanoyl-[acyl-carrier-protein]: step 2/2. Functionally, catalyzes the radical-mediated insertion of two sulfur atoms into the C-6 and C-8 positions of the octanoyl moiety bound to the lipoyl domains of lipoate-dependent enzymes, thereby converting the octanoylated domains into lipoylated derivatives. This is Lipoyl synthase from Clavibacter michiganensis subsp. michiganensis (strain NCPPB 382).